Here is a 200-residue protein sequence, read N- to C-terminus: Large ribosomal subunit protein uL4 (200 aa).

The segment at 45-64 (QKTRAEVSGGGIKPWRQKGT) is disordered.

This sequence belongs to the universal ribosomal protein uL4 family. As to quaternary structure, part of the 50S ribosomal subunit.

Functionally, one of the primary rRNA binding proteins, this protein initially binds near the 5'-end of the 23S rRNA. It is important during the early stages of 50S assembly. It makes multiple contacts with different domains of the 23S rRNA in the assembled 50S subunit and ribosome. In terms of biological role, forms part of the polypeptide exit tunnel. This Psychrobacter cryohalolentis (strain ATCC BAA-1226 / DSM 17306 / VKM B-2378 / K5) protein is Large ribosomal subunit protein uL4.